The sequence spans 83 residues: Beta-toxin Ct25 (83 aa).

An N-terminal signal peptide occupies residues 1–18; the sequence is MKVLILIIASVLLIGVEC. Positions 19–81 constitute an LCN-type CS-alpha/beta domain; the sequence is KDGYPKNSEG…VWDSATNKCG (63 aa). 4 cysteine pairs are disulfide-bonded: Cys29/Cys80, Cys33/Cys54, Cys40/Cys61, and Cys44/Cys63. Residue Gly81 is modified to Glycine amide.

Belongs to the long (4 C-C) scorpion toxin superfamily. Sodium channel inhibitor family. Beta subfamily. Expressed by the venom gland.

Its subcellular location is the secreted. Beta toxins bind voltage-independently at site-4 of sodium channels (Nav) and shift the voltage of activation toward more negative potentials thereby affecting sodium channel activation and promoting spontaneous and repetitive firing. This Centruroides tecomanus (Scorpion) protein is Beta-toxin Ct25.